A 256-amino-acid polypeptide reads, in one-letter code: uncharacterized protein (256 aa).

The signal sequence occupies residues 1 to 24 (MIKRVNKLVLGISLLFLVISITAG). The N-palmitoyl cysteine moiety is linked to residue cysteine 25. The S-diacylglycerol cysteine moiety is linked to residue cysteine 25.

Belongs to the staphylococcal tandem lipoprotein family.

It is found in the cell membrane. This is an uncharacterized protein from Staphylococcus aureus (strain NCTC 8325 / PS 47).